The primary structure comprises 394 residues: Myb-like protein R (394 aa).

The next 2 membrane-spanning stretches (helical) occupy residues 11–31 (IGAQIITTVITLFTGVFEFII) and 99–119 (FFIGAVFIHLNIIPFHHLIIF). Residues 325-377 (GNWSLDEQKALMVEVSTLGNKSEINWFFISKQLFLKGISRNARECQRKHESIQ) form the Myb-like domain.

It localises to the membrane. The protein is Myb-like protein R (mybR) of Dictyostelium discoideum (Social amoeba).